The sequence spans 20 residues: Large ribosomal subunit protein uL10 (20 aa).

Belongs to the universal ribosomal protein uL10 family. In terms of assembly, part of the ribosomal stalk of the 50S ribosomal subunit. The N-terminus interacts with L11 and the large rRNA to form the base of the stalk. The C-terminus forms an elongated spine to which L12 dimers bind in a sequential fashion forming a multimeric L10(L12)X complex.

Forms part of the ribosomal stalk, playing a central role in the interaction of the ribosome with GTP-bound translation factors. This is Large ribosomal subunit protein uL10 (rplJ) from Citrobacter freundii.